Consider the following 523-residue polypeptide: Bifunctional purine biosynthesis protein PurH (523 aa).

Residues 1–150 (MSDVVPVRNA…KNHGDVAIAT (150 aa)) enclose the MGS-like domain.

This sequence belongs to the PurH family.

It carries out the reaction (6R)-10-formyltetrahydrofolate + 5-amino-1-(5-phospho-beta-D-ribosyl)imidazole-4-carboxamide = 5-formamido-1-(5-phospho-D-ribosyl)imidazole-4-carboxamide + (6S)-5,6,7,8-tetrahydrofolate. The enzyme catalyses IMP + H2O = 5-formamido-1-(5-phospho-D-ribosyl)imidazole-4-carboxamide. It participates in purine metabolism; IMP biosynthesis via de novo pathway; 5-formamido-1-(5-phospho-D-ribosyl)imidazole-4-carboxamide from 5-amino-1-(5-phospho-D-ribosyl)imidazole-4-carboxamide (10-formyl THF route): step 1/1. Its pathway is purine metabolism; IMP biosynthesis via de novo pathway; IMP from 5-formamido-1-(5-phospho-D-ribosyl)imidazole-4-carboxamide: step 1/1. The sequence is that of Bifunctional purine biosynthesis protein PurH from Rhodopirellula baltica (strain DSM 10527 / NCIMB 13988 / SH1).